The sequence spans 380 residues: 8-amino-7-oxononanoate synthase (380 aa).

Substrate is bound at residue R26. Position 104 to 105 (104 to 105 (GY)) interacts with pyridoxal 5'-phosphate. Substrate is bound at residue H129. Pyridoxal 5'-phosphate contacts are provided by residues S175, 200–203 (DEAH), and 232–235 (TLSK). K235 bears the N6-(pyridoxal phosphate)lysine mark. Residue T345 participates in substrate binding.

Belongs to the class-II pyridoxal-phosphate-dependent aminotransferase family. BioF subfamily. Homodimer. Requires pyridoxal 5'-phosphate as cofactor.

The catalysed reaction is 6-carboxyhexanoyl-[ACP] + L-alanine + H(+) = (8S)-8-amino-7-oxononanoate + holo-[ACP] + CO2. The protein operates within cofactor biosynthesis; biotin biosynthesis. In terms of biological role, catalyzes the decarboxylative condensation of pimeloyl-[acyl-carrier protein] and L-alanine to produce 8-amino-7-oxononanoate (AON), [acyl-carrier protein], and carbon dioxide. The polypeptide is 8-amino-7-oxononanoate synthase (Mycolicibacterium vanbaalenii (strain DSM 7251 / JCM 13017 / BCRC 16820 / KCTC 9966 / NRRL B-24157 / PYR-1) (Mycobacterium vanbaalenii)).